The following is a 198-amino-acid chain: FMN-dependent NADH:quinone oxidoreductase (198 aa).

FMN is bound by residues 92–95 (MWNL) and 136–139 (SRGG).

The protein belongs to the azoreductase type 1 family. In terms of assembly, homodimer. FMN serves as cofactor.

It catalyses the reaction 2 a quinone + NADH + H(+) = 2 a 1,4-benzosemiquinone + NAD(+). It carries out the reaction N,N-dimethyl-1,4-phenylenediamine + anthranilate + 2 NAD(+) = 2-(4-dimethylaminophenyl)diazenylbenzoate + 2 NADH + 2 H(+). Its function is as follows. Quinone reductase that provides resistance to thiol-specific stress caused by electrophilic quinones. Functionally, also exhibits azoreductase activity. Catalyzes the reductive cleavage of the azo bond in aromatic azo compounds to the corresponding amines. In Clostridium perfringens (strain SM101 / Type A), this protein is FMN-dependent NADH:quinone oxidoreductase.